The primary structure comprises 386 residues: Phosphatidyl-myo-inositol mannosyltransferase (386 aa).

Residues tyrosine 9 and glycine 16 each coordinate GDP-alpha-D-mannose. Residues glutamine 18, 62-63 (YN), and arginine 68 contribute to the a 1,2-diacyl-sn-glycero-3-phospho-(1D-myo-inositol) site. GDP-alpha-D-mannose contacts are provided by residues arginine 196, 201–202 (RK), 251–253 (VDD), lysine 256, 274–278 (ESFGI), and glutamate 282.

The protein belongs to the glycosyltransferase group 1 family. Glycosyltransferase 4 subfamily. Monomer. Mg(2+) serves as cofactor.

It is found in the cell membrane. The enzyme catalyses a 1,2-diacyl-sn-glycero-3-phospho-(1D-myo-inositol) + GDP-alpha-D-mannose = a 1,2-diacyl-sn-glycero-3-phospho-[alpha-D-mannopyranosyl-(1&lt;-&gt;6)-D-myo-inositol] + GDP + H(+). It functions in the pathway phospholipid metabolism; phosphatidylinositol metabolism. Involved in the biosynthesis of phosphatidyl-myo-inositol mannosides (PIM) which are early precursors in the biosynthesis of lipomannans (LM) and lipoarabinomannans (LAM). Catalyzes the addition of a mannosyl residue from GDP-D-mannose (GDP-Man) to the position 2 of the carrier lipid phosphatidyl-myo-inositol (PI) to generate a phosphatidyl-myo-inositol bearing an alpha-1,2-linked mannose residue (PIM1). In contrary to PimB, the mannosyltransferase PimA is unable to transfer a mannose residue to the position 6 of the phosphatidyl-myo-inositol of PIM1. The protein is Phosphatidyl-myo-inositol mannosyltransferase of Mycolicibacterium smegmatis (strain ATCC 700084 / mc(2)155) (Mycobacterium smegmatis).